We begin with the raw amino-acid sequence, 191 residues long: Orotate phosphoribosyltransferase (191 aa).

114 to 122 (EDVVTTGKS) contributes to the 5-phospho-alpha-D-ribose 1-diphosphate binding site. Threonine 118 and arginine 146 together coordinate orotate.

The protein belongs to the purine/pyrimidine phosphoribosyltransferase family. PyrE subfamily. Homodimer. The cofactor is Mg(2+).

The catalysed reaction is orotidine 5'-phosphate + diphosphate = orotate + 5-phospho-alpha-D-ribose 1-diphosphate. It participates in pyrimidine metabolism; UMP biosynthesis via de novo pathway; UMP from orotate: step 1/2. Its function is as follows. Catalyzes the transfer of a ribosyl phosphate group from 5-phosphoribose 1-diphosphate to orotate, leading to the formation of orotidine monophosphate (OMP). This chain is Orotate phosphoribosyltransferase, found in Clostridium botulinum (strain Loch Maree / Type A3).